Consider the following 833-residue polypeptide: Urease (833 aa).

Residues 395-833 enclose the Urease domain; the sequence is GALDVHVHYI…LPLTRRYFVY (439 aa). Ni(2+)-binding residues include histidine 400 and histidine 402. The urea site is built by histidine 402 and alanine 433. Residue lysine 483 participates in Ni(2+) binding. At lysine 483 the chain carries N6-carboxylysine. Histidine 485 and histidine 512 together coordinate urea. The Ni(2+) site is built by histidine 512 and histidine 538. The active-site Proton donor is the histidine 586. Ni(2+) is bound at residue aspartate 626. Alanine 629 is a binding site for urea.

This sequence in the C-terminal section; belongs to the metallo-dependent hydrolases superfamily. Urease alpha subunit family. Homohexamer. It depends on Ni(2+) as a cofactor. Post-translationally, carboxylation allows a single lysine to coordinate two nickel ions.

It carries out the reaction urea + 2 H2O + H(+) = hydrogencarbonate + 2 NH4(+). It participates in nitrogen metabolism; urea degradation; CO(2) and NH(3) from urea (urease route): step 1/1. With respect to regulation, the urease accessory proteins URE4, URE6 and URE7 are required for urease activity, URE7 supplying nickel for the functional urease. Its function is as follows. Plays a nutritional role via nitrogen acquisition in the environment. Contributes to the central nervous system invasion by enhancing yeast sequestration within microcapillary beds (such as within the brain) during hematogenous spread, thereby facilitating blood-to-brain invasion by C.neoformans. Affects fitness within the mammalian phagosome, promoting non-lytic exocytosis while delaying intracellular replication and thus reducing phagolysosomal membrane damage, events that could facilitate cryptococcal dissemination when transported inside macrophages. Urease activity is also associated with the regulation of key intracellular metabolic pathways, including melanin biosynthesis, polyamine biosynthesis, as well as intracellular levels of proline and reactive oxygen species. In Cryptococcus neoformans var. grubii serotype A (strain H99 / ATCC 208821 / CBS 10515 / FGSC 9487) (Filobasidiella neoformans var. grubii), this protein is Urease.